Here is a 235-residue protein sequence, read N- to C-terminus: tRNA pseudouridine synthase B (235 aa).

Residue aspartate 45 is the Nucleophile of the active site.

Belongs to the pseudouridine synthase TruB family. Type 1 subfamily.

It carries out the reaction uridine(55) in tRNA = pseudouridine(55) in tRNA. In terms of biological role, responsible for synthesis of pseudouridine from uracil-55 in the psi GC loop of transfer RNAs. The polypeptide is tRNA pseudouridine synthase B (Chlamydia abortus (strain DSM 27085 / S26/3) (Chlamydophila abortus)).